The following is a 221-amino-acid chain: DELTA-actitoxin-Ucs1a (221 aa).

An N-terminal signal peptide occupies residues 1–19 (MNRLIVLCLFVAMIYATIA). A propeptide spanning residues 20–42 (LPKKEDISNDERSISVSKVPVKK) is cleaved from the precursor. Residues 45–54 (AIAGAVIEGA) are plays an important role in the hemolytic activity. The N-terminal region stretch occupies residues 53–72 (GAKLTFGILEKILTVLGDIN). The phosphocholine site is built by S96, V129, S147, P149, Y175, Y179, and Y180. A trp-rich region, which is important for the binding to lipid membrane region spans residues 147 to 162 (SVPYDYNLYSNWWNIK). The short motif at 186–188 (KGD) is the Cell attachment site, crucial for protein stability element.

Belongs to the actinoporin family. Sea anemone subfamily. As to quaternary structure, octamer or nonamer in membranes. Monomer in the soluble state.

The protein resides in the secreted. The protein localises to the nematocyst. Its subcellular location is the target cell membrane. Functionally, pore-forming protein that forms cations-selective hydrophilic pores of around 1 nm and causes cytolysis. Pore formation is a multi-step process that involves specific recognition of membrane sphingomyelin (but neither cholesterol nor phosphatidylcholine) using aromatic rich region and adjacent phosphocholine (POC) binding site, firm binding to the membrane (mainly driven by hydrophobic interactions) accompanied by the transfer of the N-terminal region to the lipid-water interface and finally pore formation after oligomerization of monomers. This is DELTA-actitoxin-Ucs1a from Urticina crassicornis (Mottled anemone).